The following is a 107-amino-acid chain: NADH-quinone oxidoreductase subunit K 2 (107 aa).

The next 3 helical transmembrane spans lie at 3 to 23 (LPIY…LWGA), 30 to 50 (VRIL…LITF), and 67 to 87 (ILTL…LAII).

Belongs to the complex I subunit 4L family. NDH-1 is composed of 14 different subunits. Subunits NuoA, H, J, K, L, M, N constitute the membrane sector of the complex.

It localises to the cell membrane. The catalysed reaction is a quinone + NADH + 5 H(+)(in) = a quinol + NAD(+) + 4 H(+)(out). Functionally, NDH-1 shuttles electrons from NADH, via FMN and iron-sulfur (Fe-S) centers, to quinones in the respiratory chain. The immediate electron acceptor for the enzyme in this species is believed to be a menaquinone. Couples the redox reaction to proton translocation (for every two electrons transferred, four hydrogen ions are translocated across the cytoplasmic membrane), and thus conserves the redox energy in a proton gradient. In Symbiobacterium thermophilum (strain DSM 24528 / JCM 14929 / IAM 14863 / T), this protein is NADH-quinone oxidoreductase subunit K 2.